We begin with the raw amino-acid sequence, 238 residues long: Valine-rich protein (238 aa).

The first 16 residues, 1–16, serve as a signal peptide directing secretion; sequence MQAVLLVVALFGAALA.

In terms of tissue distribution, prismatic layer of shell (at protein level). Expressed primarily in the mantle with highest level in the mantle edge and lower level in the mantle pallium.

It localises to the secreted. This chain is Valine-rich protein, found in Margaritifera margaritifera (Freshwater pearl mussel).